We begin with the raw amino-acid sequence, 510 residues long: NAD(P)H-quinone oxidoreductase subunit 2 A, chloroplastic (510 aa).

13 helical membrane passes run 24 to 44 (LLLF…GLIL), 57 to 77 (IPWL…ALLF), 99 to 119 (IFQF…VEYI), 124 to 144 (MAIT…MFLC), 149 to 169 (LITI…LSGY), 183 to 203 (YLLM…WLYG), 229 to 249 (ISIA…PAPF), 295 to 315 (WHLL…LIAI), 323 to 343 (MLAY…IVGD), 354 to 374 (YMLF…LFGL), 395 to 415 (ALSS…AGFF), 418 to 438 (LYLF…IGLL), and 484 to 504 (MILC…IIAI).

This sequence belongs to the complex I subunit 2 family. As to quaternary structure, NDH is composed of at least 16 different subunits, 5 of which are encoded in the nucleus.

It localises to the plastid. It is found in the chloroplast thylakoid membrane. It carries out the reaction a plastoquinone + NADH + (n+1) H(+)(in) = a plastoquinol + NAD(+) + n H(+)(out). The catalysed reaction is a plastoquinone + NADPH + (n+1) H(+)(in) = a plastoquinol + NADP(+) + n H(+)(out). Functionally, NDH shuttles electrons from NAD(P)H:plastoquinone, via FMN and iron-sulfur (Fe-S) centers, to quinones in the photosynthetic chain and possibly in a chloroplast respiratory chain. The immediate electron acceptor for the enzyme in this species is believed to be plastoquinone. Couples the redox reaction to proton translocation, and thus conserves the redox energy in a proton gradient. This Piper cenocladum (Ant piper) protein is NAD(P)H-quinone oxidoreductase subunit 2 A, chloroplastic.